The chain runs to 404 residues: Phosphoglycerate kinase (404 aa).

Residues 21-23, Arg-38, 61-64, Arg-126, and Arg-159 contribute to the substrate site; these read DFN and HLGR. ATP is bound by residues Lys-210, Glu-333, and 360 to 363; that span reads GGDS.

It belongs to the phosphoglycerate kinase family. Monomer.

It is found in the cytoplasm. The catalysed reaction is (2R)-3-phosphoglycerate + ATP = (2R)-3-phospho-glyceroyl phosphate + ADP. It functions in the pathway carbohydrate degradation; glycolysis; pyruvate from D-glyceraldehyde 3-phosphate: step 2/5. This Acidobacterium capsulatum (strain ATCC 51196 / DSM 11244 / BCRC 80197 / JCM 7670 / NBRC 15755 / NCIMB 13165 / 161) protein is Phosphoglycerate kinase.